The primary structure comprises 192 residues: Elongation factor P (192 aa).

The protein belongs to the elongation factor P family.

Its subcellular location is the cytoplasm. Its pathway is protein biosynthesis; polypeptide chain elongation. In terms of biological role, involved in peptide bond synthesis. Stimulates efficient translation and peptide-bond synthesis on native or reconstituted 70S ribosomes in vitro. Probably functions indirectly by altering the affinity of the ribosome for aminoacyl-tRNA, thus increasing their reactivity as acceptors for peptidyl transferase. The chain is Elongation factor P from Borrelia hermsii (strain HS1 / DAH).